Reading from the N-terminus, the 225-residue chain is NAD(P)H-quinone oxidoreductase subunit K, chloroplastic (225 aa).

Cysteine 43, cysteine 44, cysteine 108, and cysteine 139 together coordinate [4Fe-4S] cluster.

It belongs to the complex I 20 kDa subunit family. In terms of assembly, NDH is composed of at least 16 different subunits, 5 of which are encoded in the nucleus. The cofactor is [4Fe-4S] cluster.

Its subcellular location is the plastid. It localises to the chloroplast thylakoid membrane. The catalysed reaction is a plastoquinone + NADH + (n+1) H(+)(in) = a plastoquinol + NAD(+) + n H(+)(out). The enzyme catalyses a plastoquinone + NADPH + (n+1) H(+)(in) = a plastoquinol + NADP(+) + n H(+)(out). Functionally, NDH shuttles electrons from NAD(P)H:plastoquinone, via FMN and iron-sulfur (Fe-S) centers, to quinones in the photosynthetic chain and possibly in a chloroplast respiratory chain. The immediate electron acceptor for the enzyme in this species is believed to be plastoquinone. Couples the redox reaction to proton translocation, and thus conserves the redox energy in a proton gradient. The polypeptide is NAD(P)H-quinone oxidoreductase subunit K, chloroplastic (Triticum aestivum (Wheat)).